Consider the following 385-residue polypeptide: 1-deoxy-D-xylulose 5-phosphate reductoisomerase (385 aa).

6 residues coordinate NADPH: Thr10, Gly11, Ser12, Ile13, Lys37, and Asn124. Lys125 contacts 1-deoxy-D-xylulose 5-phosphate. Glu126 is a binding site for NADPH. Asp150 is a binding site for Mn(2+). Residues Ser151, Glu152, Ser176, and His199 each contribute to the 1-deoxy-D-xylulose 5-phosphate site. Glu152 contacts Mn(2+). Gly205 provides a ligand contact to NADPH. Ser212, Asn217, Lys218, and Glu221 together coordinate 1-deoxy-D-xylulose 5-phosphate. Mn(2+) is bound at residue Glu221.

This sequence belongs to the DXR family. Mg(2+) serves as cofactor. The cofactor is Mn(2+).

It carries out the reaction 2-C-methyl-D-erythritol 4-phosphate + NADP(+) = 1-deoxy-D-xylulose 5-phosphate + NADPH + H(+). It functions in the pathway isoprenoid biosynthesis; isopentenyl diphosphate biosynthesis via DXP pathway; isopentenyl diphosphate from 1-deoxy-D-xylulose 5-phosphate: step 1/6. Its function is as follows. Catalyzes the NADPH-dependent rearrangement and reduction of 1-deoxy-D-xylulose-5-phosphate (DXP) to 2-C-methyl-D-erythritol 4-phosphate (MEP). This is 1-deoxy-D-xylulose 5-phosphate reductoisomerase from Clostridium botulinum (strain Okra / Type B1).